The following is a 790-amino-acid chain: Ribosome biogenesis protein ERB1 (790 aa).

Residues 1–93 form a disordered region; the sequence is MAKKNTVTGS…SDELQDDSNS (93 aa). A compositionally biased stretch (acidic residues) spans 20 to 89; the sequence is SPEVSESEEI…SEDFSDELQD (70 aa). Positions 255–371 are required for interaction with NOP7; that stretch reads RFVPSKHEAK…LRKVPAYQEN (117 aa). Positions 371-407 are required for interaction with YTM1; sequence NLRERFERSLDLYLAPRVRHNKLNIDPDSLIPDLPSP. WD repeat units follow at residues 423–462, 470–510, 574–616, 619–657, 660–699, 703–743, and 759–790; these read GHIGRVRTLSIDPSGLWLATGGDDGTVRVWEILTGRQVYH, KDDD…YEIE, QCRK…SQSP, KSKGIIVDAKFHPFKPQLFVASQRSIKIYDLSQQVLTKK, PGARYLSGIDIHPRGDHLLASSYDKRVLWHDLDLSNTPYK, YHEK…DLMT, and VHSLGVLDLVWHPKEAWLFTAGADGTARLWTT.

It belongs to the WD repeat BOP1/ERB1 family. As to quaternary structure, component of the NOP7 complex, composed of ERB1, NOP7 and YTM1. The complex is held together by ERB1, which interacts with NOP7 via its N-terminal domain and with YTM1 via a high-affinity interaction between the seven-bladed beta-propeller domains of the 2 proteins. The NOP7 complex associates with the 66S pre-ribosome.

The protein resides in the nucleus. It is found in the nucleolus. The protein localises to the nucleoplasm. Its function is as follows. Component of the NOP7 complex, which is required for maturation of the 25S and 5.8S ribosomal RNAs and formation of the 60S ribosome. The polypeptide is Ribosome biogenesis protein ERB1 (Meyerozyma guilliermondii (strain ATCC 6260 / CBS 566 / DSM 6381 / JCM 1539 / NBRC 10279 / NRRL Y-324) (Yeast)).